A 103-amino-acid polypeptide reads, in one-letter code: Small ribosomal subunit protein eS25 (103 aa).

The segment at 1 to 23 is disordered; that stretch reads MGGEDMAKKKAPSAKEGEKQQGF.

Belongs to the eukaryotic ribosomal protein eS25 family.

This chain is Small ribosomal subunit protein eS25 (rps25e), found in Aeropyrum pernix (strain ATCC 700893 / DSM 11879 / JCM 9820 / NBRC 100138 / K1).